Reading from the N-terminus, the 225-residue chain is MLGLDACELGAQLLELLRLALCARVLLADKEGGPPAVDEVLDEAVPEYRAPGRKSLLEIRQLDPDDRSLAKYKRVLLGPLPPAVDPSLPNVQVTRLTLLSEQAPGPVVMDLTGDLAVLKDQVFVLKEGVDYRVKISFKVHREIVSGLKCLHHTYRRGLRVDKTVYMVGSYGPSAQEYEFVTPVEEAPRGALVRGPYLVVSLFTDDDRTHHLSWEWGLCICQDWKD.

This sequence belongs to the Rho GDI family. In terms of tissue distribution, primarily expressed in pancreas and brain.

The protein resides in the cytoplasm. Inhibits GDP/GTP exchange reaction of RhoB. Interacts specifically with the GDP- and GTP-bound forms of post-translationally processed Rhob and Rhog proteins, both of which show a growth-regulated expression in mammalian cells. Stimulates the release of the GDP-bound but not the GTP-bound RhoB protein. Also inhibits the GDP/GTP exchange of RhoB but shows less ability to inhibit the dissociation of prebound GTP. This is Rho GDP-dissociation inhibitor 3 (ARHGDIG) from Homo sapiens (Human).